A 426-amino-acid chain; its full sequence is 3-phosphoshikimate 1-carboxyvinyltransferase (426 aa).

Positions 22, 23, and 27 each coordinate 3-phosphoshikimate. Phosphoenolpyruvate is bound at residue lysine 22. Phosphoenolpyruvate is bound by residues glycine 96 and arginine 124. 3-phosphoshikimate-binding residues include serine 170, serine 171, glutamine 172, serine 198, aspartate 314, asparagine 337, and lysine 341. Glutamine 172 is a phosphoenolpyruvate binding site. Aspartate 314 serves as the catalytic Proton acceptor. Residues arginine 345, arginine 387, and lysine 412 each coordinate phosphoenolpyruvate.

This sequence belongs to the EPSP synthase family. As to quaternary structure, monomer.

It localises to the cytoplasm. The catalysed reaction is 3-phosphoshikimate + phosphoenolpyruvate = 5-O-(1-carboxyvinyl)-3-phosphoshikimate + phosphate. It participates in metabolic intermediate biosynthesis; chorismate biosynthesis; chorismate from D-erythrose 4-phosphate and phosphoenolpyruvate: step 6/7. Its function is as follows. Catalyzes the transfer of the enolpyruvyl moiety of phosphoenolpyruvate (PEP) to the 5-hydroxyl of shikimate-3-phosphate (S3P) to produce enolpyruvyl shikimate-3-phosphate and inorganic phosphate. The protein is 3-phosphoshikimate 1-carboxyvinyltransferase of Vibrio atlanticus (strain LGP32) (Vibrio splendidus (strain Mel32)).